A 406-amino-acid chain; its full sequence is MMVTVVSNYCQLSQKQLSQTFAEKFTVTEELLQSLKKTALSGDEESIELLHNIALGYDKFGKEAEDILYHIVRNPTNETLSIIRLIKNACLKLYNLAHTATNFPLKPTGPDNSDVLLFKKLFSPSKLMTIIGDEIPLISEKQSLSKVLLNDENNELSDGTNFWDKNRQLTTDEIDCYLQKIAANAKNTEVNYPTGLYVPYSTRTHLEDALNENIKSDPSWPKAVQLFPINTGGHWILVSLQKIVNEKNNTQQIKCVIFNSLRALGHDKENSLKRVINSFNSEFMGEMSNNNIKVHLTEPEIIFLHADLQQYLSQSCGAFVCMAAQEVIEQRESNSDSAPYTLLKNYADRFKKYSAEEQYEIDFQHRLVNRNCYLDKYGDARINASYTQLEIKHSQPKNRASGKRVS.

The active site involves His-234. Cys-316 functions as the Nucleophile in the catalytic mechanism.

This sequence belongs to the peptidase C79 family.

Its function is as follows. Protease that can act as an efficient and specific deubiquitinating enzyme in vitro. Does not possess desumoylating and deneddylating activities. The physiological substrate is unknown. In Escherichia coli O139:H28 (strain E24377A / ETEC), this protein is Protease ElaD (elaD).